Consider the following 158-residue polypeptide: 6,7-dimethyl-8-ribityllumazine synthase (158 aa).

5-amino-6-(D-ribitylamino)uracil-binding positions include phenylalanine 23, 61–63 (SFE), and 85–87 (AVI). Residue 90–91 (ET) participates in (2S)-2-hydroxy-3-oxobutyl phosphate binding. Catalysis depends on histidine 93, which acts as the Proton donor. Phenylalanine 118 serves as a coordination point for 5-amino-6-(D-ribitylamino)uracil. A (2S)-2-hydroxy-3-oxobutyl phosphate-binding site is contributed by arginine 132.

Belongs to the DMRL synthase family.

It carries out the reaction (2S)-2-hydroxy-3-oxobutyl phosphate + 5-amino-6-(D-ribitylamino)uracil = 6,7-dimethyl-8-(1-D-ribityl)lumazine + phosphate + 2 H2O + H(+). It participates in cofactor biosynthesis; riboflavin biosynthesis; riboflavin from 2-hydroxy-3-oxobutyl phosphate and 5-amino-6-(D-ribitylamino)uracil: step 1/2. Catalyzes the formation of 6,7-dimethyl-8-ribityllumazine by condensation of 5-amino-6-(D-ribitylamino)uracil with 3,4-dihydroxy-2-butanone 4-phosphate. This is the penultimate step in the biosynthesis of riboflavin. The chain is 6,7-dimethyl-8-ribityllumazine synthase from Prochlorococcus marinus subsp. pastoris (strain CCMP1986 / NIES-2087 / MED4).